Here is a 151-residue protein sequence, read N- to C-terminus: Large ribosomal subunit protein uL23m (151 aa).

Residues 120-143 (DDKKSLEDAKKNHKKFLDKNKDRP) show a composition bias toward basic and acidic residues. The interval 120–151 (DDKKSLEDAKKNHKKFLDKNKDRPGTPGWFSI) is disordered.

Belongs to the universal ribosomal protein uL23 family. Component of the mitochondrial ribosome large subunit (39S) which comprises a 16S rRNA and about 50 distinct proteins.

It is found in the mitochondrion. The sequence is that of Large ribosomal subunit protein uL23m (mRpL23) from Anopheles gambiae (African malaria mosquito).